The chain runs to 108 residues: ATP-dependent Clp protease adapter protein ClpS (108 aa).

The protein belongs to the ClpS family. As to quaternary structure, binds to the N-terminal domain of the chaperone ClpA.

Its function is as follows. Involved in the modulation of the specificity of the ClpAP-mediated ATP-dependent protein degradation. This Ralstonia pickettii (strain 12J) protein is ATP-dependent Clp protease adapter protein ClpS.